A 1997-amino-acid chain; its full sequence is Chromatin-remodeling ATPase INO80 (1997 aa).

3 disordered regions span residues 1–378, 397–579, and 674–858; these read MDHF…AAPS, IAAP…AENE, and ERKK…EKVV. Residues 12 to 25 are compositionally biased toward basic and acidic residues; the sequence is PHFDEDGTEGRGDR. The segment covering 32-41 has biased composition (pro residues); it reads GPAPPPPPPR. Residues 49–64 show a composition bias toward low complexity; sequence NPVSSNSAVQSQAAAA. Residues 89 to 107 show a composition bias toward polar residues; sequence STNSMRATPHSSSSFNLRS. Residues 108 to 117 show a composition bias toward basic and acidic residues; sequence PTREPSEYRH. Low complexity-rich tracts occupy residues 118–156, 203–230, and 240–251; these read PLSSLATPAPFAASPPTSIANANNTNNNNALGAAGSLSS, SLQAPPAITPIAGLSAPAPASGSLPLSA, and SSSSQPPARASQ. A compositionally biased stretch (basic and acidic residues) spans 264–276; that stretch reads SFRDRDSSVREKS. The span at 288–297 shows a compositional bias: polar residues; it reads EASNGISGSS. Residues 298-317 show a composition bias toward basic and acidic residues; the sequence is PRKDRDRDRDHRGTTRESQR. 2 stretches are compositionally biased toward polar residues: residues 318 to 340 and 366 to 378; these read RSVSGHSDTGSSWRNATQTSASN and VDNTTSSSIAAPS. Over residues 411-420 the composition is skewed to low complexity; the sequence is SPRLSLRPPS. Composition is skewed to polar residues over residues 433–442, 451–465, and 472–481; these read NPTNGTTSTA, SPPSKMSPGTSTNPS, and SFSNILSSSE. Basic and acidic residues-rich tracts occupy residues 500-519 and 529-540; these read VPMKVERADSSEKVVKEKKE and RISDIRHSESTP. Residues 666-735 adopt a coiled-coil conformation; that stretch reads ERELFAEKER…VQQTRLILQK (70 aa). A compositionally biased stretch (low complexity) spans 689–707; it reads MATTMEAKAAALARASAAQ. Positions 709–723 are enriched in basic and acidic residues; sequence EAERQKYMREAERAN. A compositionally biased stretch (basic residues) spans 769 to 781; that stretch reads TKGKGRAGARPKK. Residues 782–793 are compositionally biased toward basic and acidic residues; that stretch reads SKEQKQAEKDAA. Residues 794-806 are compositionally biased toward low complexity; the sequence is EAAQAALDAGLEL. Positions 824–858 are enriched in basic and acidic residues; the sequence is APKEADVDKDKENKEPQEPKEPKEPKEKVIKEKVV. The DBINO domain maps to 881–1006; the sequence is IWRDLARKDV…SHFIGKKIKT (126 aa). The region spanning 1130–1302 is the Helicase ATP-binding domain; the sequence is VNLYEQGING…WALLHFIMPS (173 aa). Position 1143–1150 (1143–1150) interacts with ATP; it reads DEMGLGKT. The short motif at 1253-1256 is the DEAQ box element; it reads DEAQ. Positions 1702–1858 constitute a Helicase C-terminal domain; sequence KLDELLRELK…GSSAAGGGVD (157 aa). The segment covering 1891–1902 has biased composition (basic and acidic residues); it reads ELLESGELDKMQ. The tract at residues 1891–1986 is disordered; sequence ELLESGELDK…GSKKAKTTKQ (96 aa). The segment covering 1903-1914 has biased composition (basic residues); it reads KKSRGGNKRKRG. The span at 1919 to 1933 shows a compositional bias: basic and acidic residues; that stretch reads EGKEVSLDEMYHEGE. The span at 1954 to 1967 shows a compositional bias: gly residues; that stretch reads AAGGEGGDGKGAVG. Over residues 1970-1985 the composition is skewed to basic residues; it reads AKKRKTGGSKKAKTTK.

This sequence belongs to the SNF2/RAD54 helicase family. In terms of assembly, component of the INO80 chromatin-remodeling complex.

The protein resides in the nucleus. The catalysed reaction is ATP + H2O = ADP + phosphate + H(+). ATPase component of the INO80 complex which remodels chromatin by shifting nucleosomes and is involved in DNA repair. The polypeptide is Chromatin-remodeling ATPase INO80 (crf2-1) (Neurospora crassa (strain ATCC 24698 / 74-OR23-1A / CBS 708.71 / DSM 1257 / FGSC 987)).